Here is a 537-residue protein sequence, read N- to C-terminus: T-complex protein 1 subunit theta (537 aa).

It belongs to the TCP-1 chaperonin family. In terms of assembly, heterooligomeric complex.

It localises to the cytoplasm. Functionally, molecular chaperone; assists the folding of proteins upon ATP hydrolysis. Known to play a role, in vitro, in the folding of actin and tubulin. In Dictyostelium discoideum (Social amoeba), this protein is T-complex protein 1 subunit theta (cct8).